The primary structure comprises 487 residues: N-succinylglutamate 5-semialdehyde dehydrogenase (487 aa).

221–226 (GSSDTG) lines the NAD(+) pocket. Catalysis depends on residues glutamate 244 and cysteine 278.

Belongs to the aldehyde dehydrogenase family. AstD subfamily.

The catalysed reaction is N-succinyl-L-glutamate 5-semialdehyde + NAD(+) + H2O = N-succinyl-L-glutamate + NADH + 2 H(+). The protein operates within amino-acid degradation; L-arginine degradation via AST pathway; L-glutamate and succinate from L-arginine: step 4/5. In terms of biological role, catalyzes the NAD-dependent reduction of succinylglutamate semialdehyde into succinylglutamate. The protein is N-succinylglutamate 5-semialdehyde dehydrogenase of Burkholderia thailandensis (strain ATCC 700388 / DSM 13276 / CCUG 48851 / CIP 106301 / E264).